Reading from the N-terminus, the 130-residue chain is Large ribosomal subunit protein bL19 (130 aa).

It belongs to the bacterial ribosomal protein bL19 family.

Its function is as follows. This protein is located at the 30S-50S ribosomal subunit interface and may play a role in the structure and function of the aminoacyl-tRNA binding site. The chain is Large ribosomal subunit protein bL19 from Parvibaculum lavamentivorans (strain DS-1 / DSM 13023 / NCIMB 13966).